The chain runs to 658 residues: NADH-ubiquinone oxidoreductase chain 5 (658 aa).

A run of 17 helical transmembrane segments spans residues 4 to 23 (TLIVLPLLGSISSGFFGRKI), 30 to 52 (IITCSSVILTTLLALLAFIEVGI), 81 to 103 (LTVSMLIPVLIVSSLVHIYSISY), 112 to 129 (RFFSYLSLFTFMMIILVT), 133 to 155 (YLLMFVGWEGVGICSYLLINFWF), 168 to 190 (LLTNRVGDCFLTIGIFAMLWSFG), 200 to 222 (LAPYYNENIITMIGICLVIGATA), 243 to 262 (VSALIHAATMVTAGVYLLMR), 272 to 294 (TVLIICLWLGAITTVFSSLIGLF), 301 to 319 (VIAYSTMSQLGMMVIGIGL), 329 to 351 (LVNHAFYKALLFLGAGAVIHSVA), 364 to 386 (PFLPLTYSVMLIASLSLVAVPFM), 409 to 431 (IVYFIATIGAMFTTLYSAKVLYL), 452 to 471 (LFLNIPLIILAVFSIFFGFL), 505 to 527 (VPVLFKLLPFFFTISLSILSILY), 607 to 629 (LSTGVVTTYALYILMGLMFYIST), and 639 to 656 (LLILIIFSLFVILNNKLL).

It belongs to the complex I subunit 5 family.

Its subcellular location is the mitochondrion inner membrane. The enzyme catalyses a ubiquinone + NADH + 5 H(+)(in) = a ubiquinol + NAD(+) + 4 H(+)(out). Functionally, core subunit of the mitochondrial membrane respiratory chain NADH dehydrogenase (Complex I) that is believed to belong to the minimal assembly required for catalysis. Complex I functions in the transfer of electrons from NADH to the respiratory chain. The immediate electron acceptor for the enzyme is believed to be ubiquinone. The protein is NADH-ubiquinone oxidoreductase chain 5 (nad5) of Talaromyces marneffei (Penicillium marneffei).